The following is a 31-amino-acid chain: Photosystem II reaction center protein T (31 aa).

A helical transmembrane segment spans residues 3-23 (ALVYTFLLVGTLGIIFFSIFF).

This sequence belongs to the PsbT family. In terms of assembly, PSII is composed of 1 copy each of membrane proteins PsbA, PsbB, PsbC, PsbD, PsbE, PsbF, PsbH, PsbI, PsbJ, PsbK, PsbL, PsbM, PsbT, PsbY, PsbZ, Psb30/Ycf12, at least 3 peripheral proteins of the oxygen-evolving complex and a large number of cofactors. It forms dimeric complexes.

The protein localises to the plastid. It localises to the chloroplast thylakoid membrane. Functionally, found at the monomer-monomer interface of the photosystem II (PS II) dimer, plays a role in assembly and dimerization of PSII. PSII is a light-driven water plastoquinone oxidoreductase, using light energy to abstract electrons from H(2)O, generating a proton gradient subsequently used for ATP formation. The sequence is that of Photosystem II reaction center protein T from Tupiella akineta (Green alga).